A 564-amino-acid polypeptide reads, in one-letter code: GTYGYPTPAVKKIESYYDVPEGVDIRGRYDAEFAKILTKDALKFVADLQREFRNHIKYALECRREAKKKYNEGALPEFDPATTYIREQEWVCAPVPPAVADRKVEITGPVDRKMVINALNSGAKVFMADFEDALSPGWENLMRGQVNLKDAVAGTISLHDKARNRVYKLNDQTAKLFVRPRGWHLPEAHILIDGEPATGCLVDFGLYFYHSYSAFRRTQGAGFGPFFYLPKMEHSREAKIWNNVFEKAEKVAGIERGSIRATVLIETLPAVFQMNEILYELKDHSVGLNCGRWDYIFSYVKTFQAHPDRLLPDRVLVGMTQHFMKSYSDLLIRTCHRRGVHAMGGMAAQIPIKEDPVANEVALELVRKDKLREVKAGHDGTWAAHPGLIPACMEIFNNNMGNASNQIDTVKREDGANITEQDLLQIPRGARTMEGLRLNTRVGIQYVAAWLTGSGSVPLYNLMEDAATAEISRVQNWQWLKYGVELNGDGLGVKVNKELFGRVVEEEMARIEKEVGTEKFKEGMYKEACKIFTRQCTSPMLDDFLTLDAYNYIVVHHPRETSKL.

Arginine 179 functions as the Proton acceptor in the catalytic mechanism. Catalysis depends on aspartate 465, which acts as the Proton donor. The short motif at 562 to 564 (SKL) is the Microbody targeting signal element.

This sequence belongs to the malate synthase family.

The protein resides in the glyoxysome. It carries out the reaction glyoxylate + acetyl-CoA + H2O = (S)-malate + CoA + H(+). The protein operates within carbohydrate metabolism; glyoxylate cycle; (S)-malate from isocitrate: step 2/2. The chain is Malate synthase, glyoxysomal from Glycine max (Soybean).